The primary structure comprises 239 residues: Mitochondrial fission factor homolog B (239 aa).

Topologically, residues M1 to M219 are cytoplasmic. Residues E107–N139 are disordered. Basic and acidic residues predominate over residues H115–L130. Positions D184–R214 form a coiled coil. A helical; Anchor for type IV membrane protein transmembrane segment spans residues T220–F237. At R238–R239 the chain is on the extracellular side.

This sequence belongs to the Tango11 family.

The protein localises to the mitochondrion outer membrane. The protein resides in the peroxisome. In terms of biological role, plays a role in mitochondrial and peroxisomal fission. Promotes the recruitment and association of the fission mediator dynamin-related protein 1 (DNM1L) to the mitochondrial surface. This chain is Mitochondrial fission factor homolog B (mff-b), found in Xenopus laevis (African clawed frog).